Consider the following 1475-residue polypeptide: Alpha-glucan water dikinase, chloroplastic (1475 aa).

The N-terminal 85 residues, 1–85 (MSNSIGRNVL…HRPVLITPRA (85 aa)), are a transit peptide targeting the chloroplast. Histidine 1077 serves as the catalytic Tele-phosphohistidine intermediate.

This sequence belongs to the PEP-utilizing enzyme family. In terms of assembly, homodimer. Requires Mg(2+) as cofactor.

Its subcellular location is the plastid. The protein localises to the chloroplast. The enzyme catalyses [(1-&gt;4)-alpha-D-glucosyl](n) + n ATP + n H2O = [(1-&gt;4)-6-phospho-alpha-D-glucosyl](n) + n AMP + n phosphate + 2n H(+). Mediates the incorporation of phosphate into starch-like alpha-glucan, mostly at the C-6 position of glucose units. Acts as an overall regulator of starch mobilization. Required for starch degradation, suggesting that the phosphate content of starch regulates its degradability. The protein is Alpha-glucan water dikinase, chloroplastic (R1) of Citrus reticulata (Tangerine).